Here is a 166-residue protein sequence, read N- to C-terminus: Large ribosomal subunit protein uL10 (166 aa).

It belongs to the universal ribosomal protein uL10 family. Part of the ribosomal stalk of the 50S ribosomal subunit. The N-terminus interacts with L11 and the large rRNA to form the base of the stalk. The C-terminus forms an elongated spine to which L12 dimers bind in a sequential fashion forming a multimeric L10(L12)X complex.

Its function is as follows. Forms part of the ribosomal stalk, playing a central role in the interaction of the ribosome with GTP-bound translation factors. The polypeptide is Large ribosomal subunit protein uL10 (Streptococcus pneumoniae (strain 70585)).